Consider the following 396-residue polypeptide: 3-hydroxykynurenine transaminase (396 aa).

Positions 43-44 are binds to and confers specificity for 3-hydroxykynurenine; shared with dimeric partner; the sequence is SN. Pyridoxal 5'-phosphate contacts are provided by residues 77–79, Ser154, and Gln204; that span reads SAH. Ser154 contacts substrate. Lys205 carries the post-translational modification N6-(pyridoxal phosphate)lysine. Residues Tyr256 and Thr259 each contribute to the pyridoxal 5'-phosphate site. Arg356 contributes to the substrate binding site.

Belongs to the class-V pyridoxal-phosphate-dependent aminotransferase family. In terms of assembly, homodimer. Pyridoxal 5'-phosphate serves as cofactor. As to expression, expressed in gut and ovaries.

It is found in the peroxisome. It catalyses the reaction L-kynurenine + glyoxylate = kynurenate + glycine + H2O. It carries out the reaction 3-hydroxy-L-kynurenine + glyoxylate = xanthurenate + glycine + H2O. The enzyme catalyses 3-hydroxy-L-kynurenine + pyruvate = xanthurenate + L-alanine + H2O. The catalysed reaction is glyoxylate + L-alanine = glycine + pyruvate. It participates in amino-acid degradation; L-kynurenine degradation; kynurenate from L-kynurenine: step 1/2. Functionally, catalyzes the pyridoxal 5'-phosphate-dependent transamination of both 3-hydroxykynurenine and L-kynurenine to xanthurenic acid and kynurenic acid, respectively, preferentially using the alpha-ketoacid glyoxylate as the amino group acceptor. Although glyoxylate is the preferred amino group acceptor, transamination of 3-hydroxykynurenine also works with pyruvate as the amino acceptor in vitro. Involved in the detoxification of cytotoxic metabolite 3-hydroxykynurenine generated by the hydroxylation of L-kynurenine, an intermediate in the tryptophan catabolism pathway. The Plasmodium parasite uses xanthurenic acid produced in the midgut to activate its gametocytes ingested during a blood meal. Also catalyzes, although with a lesser efficiency, the transamination of alanine with glyoxylate as an amino group acceptor. May play a role in the detoxification of glyoxylate, a toxic plant metabolite from the diet. The sequence is that of 3-hydroxykynurenine transaminase from Anopheles gambiae (African malaria mosquito).